The primary structure comprises 591 residues: Pentatricopeptide repeat-containing protein At2g35130 (591 aa).

12 PPR repeats span residues 154–188 (DVICFNLLIDAYGQKFQYKEAESLYVQLLESRYVP), 189–223 (TEDTYALLIKAYCMAGLIERAEVVLVEMQNHHVSP), 227–262 (GVTVYNAYIEGLMKRKGNTEEAIDVFQRMKRDRCKP), 263–297 (TTETYNLMINLYGKASKSYMSWKLYCEMRSHQCKP), 298–332 (NICTYTALVNAFAREGLCEKAEEIFEQLQEDGLEP), 333–367 (DVYVYNALMESYSRAGYPYGAAEIFSLMQHMGCEP), 368–402 (DRASYNIMVDAYGRAGLHSDAEAVFEEMKRLGIAP), 403–437 (TMKSHMLLLSAYSKARDVTKCEAIVKEMSENGVEP), 438–472 (DTFVLNSMLNLYGRLGQFTKMEKILAEMENGPCTA), 473–507 (DISTYNILINIYGKAGFLERIEELFVELKEKNFRP), 508–542 (DVVTWTSRIGAYSRKKLYVKCLEVFEEMIDSGCAP), and 543–573 (DGGTAKVLLSACSSEEQVEQVTSVLRTMHKG).

It belongs to the PPR family. P subfamily.

The protein is Pentatricopeptide repeat-containing protein At2g35130 of Arabidopsis thaliana (Mouse-ear cress).